The primary structure comprises 161 residues: Transcriptional repressor NrdR (161 aa).

Residues 3–34 (CPSCQHTDSRVLESRAADSGKSVRRRRECLNC) fold into a zinc finger. Residues 49–139 (ITVVKRSGTR…VYGKFSGISD (91 aa)) form the ATP-cone domain.

This sequence belongs to the NrdR family. Zn(2+) serves as cofactor.

In terms of biological role, negatively regulates transcription of bacterial ribonucleotide reductase nrd genes and operons by binding to NrdR-boxes. The polypeptide is Transcriptional repressor NrdR (Synechococcus sp. (strain RCC307)).